The following is a 307-amino-acid chain: Dioxygenase swnH1 (307 aa).

Residues His149, Asp151, and His227 each coordinate Fe cation.

The protein belongs to the PhyH family. Homodimer. Fe cation serves as cofactor.

It functions in the pathway mycotoxin biosynthesis. Its function is as follows. Dioxygenase; part of the gene cluster that mediates the biosynthesis of swainsonine (SW), a cytotoxic fungal alkaloid and a potential cancer therapy drug. Swainsonine production occurs via a multibranched pathway and is dispensable for fungal colonization of plants and infection of insect hosts. The first step of swainsonine biosynthesis is the production of the precursor pipecolic acid (PA) via conversion of L-lysine (Lys) to 1-piperideine-6-carboxylate (P6C) by the aminotransferase swnA, the latter being further reduced to PA by the reductase swnR. The PKS-NRPS hybrid synthetase swnK uptakes and condensates PA and malonyl-CoA with and without skipping of the ketoreductase (KR) domain in order to produce 3 intermediates, 1-oxoindolizidine, (1S)-1-hydroxyindolizin, and (1R)-1-hydroxyindolizine; with the transisomer (1S)-1-hydroxyindolizin being predominant. The terminal thioester reductase (TE) domain of swnK is involved in reduction of the thioester bond to release the intermediate aldehydes. The oxidoreductase swnN could contribute to the reduction of 1-oxoindolizidine to (1S)-1-hydroxyindolizin and (1R)-1-hydroxyindolizine, contributing to the major route of SW production. The dioxygenase swnH2 would be responsible for the oxidization of (1R)-1-hydroxyindolizine into (1R,2S)-1,2-dihydroxyindolizine and of (1S)-1-hydroxyindolizin to yield both (1R,2S)-1,2-dihydroxyindolizine and (1S,2S)-1,2-dihydroxyindolizine. The dioxygenase swnH1 then performs the conversion of the 1,2-dihydroxyindolizine epimers to SW. The chain is Dioxygenase swnH1 from Arthroderma benhamiae (strain ATCC MYA-4681 / CBS 112371) (Trichophyton mentagrophytes).